Consider the following 137-residue polypeptide: Large ribosomal subunit protein uL16 (137 aa).

Belongs to the universal ribosomal protein uL16 family. In terms of assembly, part of the 50S ribosomal subunit.

Its function is as follows. Binds 23S rRNA and is also seen to make contacts with the A and possibly P site tRNAs. The sequence is that of Large ribosomal subunit protein uL16 from Rhodopseudomonas palustris (strain HaA2).